The chain runs to 755 residues: Polyribonucleotide nucleotidyltransferase (755 aa).

Mg(2+)-binding residues include aspartate 545 and aspartate 551. The KH domain maps to 611 to 670 (PRITAITVPVNKIGEVIGPKGKTINSITEETGANISIEEDGTVYVSAASGAAAEAAIEKI). Residues 682-751 (GERFLGTVVK…NRGKISLAPV (70 aa)) enclose the S1 motif domain.

The protein belongs to the polyribonucleotide nucleotidyltransferase family. Mg(2+) serves as cofactor.

It localises to the cytoplasm. It catalyses the reaction RNA(n+1) + phosphate = RNA(n) + a ribonucleoside 5'-diphosphate. Involved in mRNA degradation. Catalyzes the phosphorolysis of single-stranded polyribonucleotides processively in the 3'- to 5'-direction. The chain is Polyribonucleotide nucleotidyltransferase from Corynebacterium diphtheriae (strain ATCC 700971 / NCTC 13129 / Biotype gravis).